Consider the following 449-residue polypeptide: MTLSGQTMPLEARKCQSLTGRVRVPGDKSISHRALILGALAVGETRISGLLEGEDVLNTAKAMQALGAKVERRTDDNGGIAWSVRGVGTGGFATPEAPLDFGNSGTGCRLVMGAVAGCPIRAAFDGDGSLRSRPMRRILDPLELMGARVISQSDGGRLPLTLEGARDPLPIVYRTPVASAQIKSAVLLAGLSAPGVTTVIEREASRDHTELMLKHFGADIVSVAEGAHGRKISLTGQPELHGAGVTVPADPSSAAFPIVAALITEGSDIVLDDVMTNPLRTGLFVTLREMGASIEESETRLDAGEPMAQLRVKASRLRGIEVPAERAPSMIDEYLVLAVAAAFAEGTTVMRGLRELRVKESDRLEAAAAMLRAGGVAVEIAGDDLIVEGRGRVPGGGLVTTHMDHRIAMSALVMGCASDAPVKVDDIAFIATSFPDFVPMMQRLGANFA.

Residues Lys-28, Ser-29, and Arg-33 each contribute to the 3-phosphoshikimate site. Lys-28 serves as a coordination point for phosphoenolpyruvate. Phosphoenolpyruvate contacts are provided by Gly-105 and Arg-133. Positions 179, 181, 332, and 359 each coordinate 3-phosphoshikimate. Gln-181 is a binding site for phosphoenolpyruvate. Residue Asp-332 is the Proton acceptor of the active site. Phosphoenolpyruvate contacts are provided by Arg-363 and Arg-406.

It belongs to the EPSP synthase family. As to quaternary structure, monomer.

It localises to the cytoplasm. It catalyses the reaction 3-phosphoshikimate + phosphoenolpyruvate = 5-O-(1-carboxyvinyl)-3-phosphoshikimate + phosphate. It functions in the pathway metabolic intermediate biosynthesis; chorismate biosynthesis; chorismate from D-erythrose 4-phosphate and phosphoenolpyruvate: step 6/7. In terms of biological role, catalyzes the transfer of the enolpyruvyl moiety of phosphoenolpyruvate (PEP) to the 5-hydroxyl of shikimate-3-phosphate (S3P) to produce enolpyruvyl shikimate-3-phosphate and inorganic phosphate. The polypeptide is 3-phosphoshikimate 1-carboxyvinyltransferase (Nitrobacter winogradskyi (strain ATCC 25391 / DSM 10237 / CIP 104748 / NCIMB 11846 / Nb-255)).